A 1055-amino-acid chain; its full sequence is Auxin response factor 16 (1055 aa).

Residues 127-229 constitute a DNA-binding region (TF-B3); that stretch reads FCKTLTASDT…QLLLGIRRAT (103 aa). Disordered stretches follow at residues 485 to 510, 532 to 565, 585 to 609, 701 to 720, and 732 to 769; these read PVMSQHQQQPHQLSQQQQVQPSQQSS, QEHLQRQQSQPAQQLKAASSLHSVEQHKLKEQTS, SQLQQLGLPKSPTHRQGLTGLPIAG, SDSIGQLKQSPSQQAPLNHM, and SHSALAESGDPSSSTAPSTSRISPINSLSRANQGSRNL. Low complexity-rich tracts occupy residues 488-510 and 532-552; these read SQHQQQPHQLSQQQQVQPSQQSS and QEHLQRQQSQPAQQLKAASSL. Positions 742–756 are enriched in low complexity; it reads PSSSTAPSTSRISPI. The segment covering 757-769 has biased composition (polar residues); it reads NSLSRANQGSRNL. Positions 940-1024 constitute a PB1 domain; sequence RTFTKVQKRG…KSIKILSAAE (85 aa). Residues 1034 to 1055 are disordered; sequence LGGVPPQTQACSASDDANAWRG.

This sequence belongs to the ARF family. Homodimers and heterodimers. In terms of tissue distribution, expressed in roots, culms, leaves and young panicles.

Its subcellular location is the nucleus. Functionally, auxin response factors (ARFs) are transcriptional factors that bind specifically to the DNA sequence 5'-TGTCTC-3' found in the auxin-responsive promoter elements (AuxREs). This Oryza sativa subsp. japonica (Rice) protein is Auxin response factor 16 (ARF16).